The sequence spans 304 residues: Hairy/enhancer-of-split related with YRPW motif protein 1 (304 aa).

The interval 1-52 (MKRAHPDYSSSDSELDETVEVEKESADENGNLSSALGSMSPTTSSQILARKR) is disordered. A compositionally biased stretch (polar residues) spans 28–47 (ENGNLSSALGSMSPTTSSQI). The segment at 48–117 (LARKRRRGII…GGKGYFDAHA (70 aa)) is transcriptional repression and interaction with NCOR1 and SIN3A. A bHLH domain is found at 49–104 (ARKRRRGIIEKRRRDRINNSLSELRRLVPSAFEKQGSAKLEKAEILQMTVDHLKML). One can recognise an Orange domain in the interval 122–158 (YRSLGFRECLAEVARYLSIIEGLDASDPLRVRLVSHL). The interval 191–234 (AHPLLLPQSGHGNTGTSASPTDPHHQGRLAAAHPEAPALRAPPS) is disordered. Residues 200 to 210 (GHGNTGTSASP) show a composition bias toward polar residues. Low complexity predominate over residues 218–234 (RLAAAHPEAPALRAPPS).

It belongs to the HEY family. In terms of assembly, self-associates. Interacts with HES1 and HEYL. Interacts with HDAC1, NCOR1 and SIN3A. Interacts with GATA4 and GATA6. Interacts with CCDC89/BOIP.

Its subcellular location is the nucleus. Its function is as follows. Transcriptional repressor which binds preferentially to the canonical E box sequence 5'-CACGTG-3'. Downstream effector of Notch signaling required for cardiovascular development. Specifically required for the Notch-induced endocardial epithelial to mesenchymal transition, which is itself criticial for cardiac valve and septum development. May be required in conjunction with HEY2 to specify arterial cell fate or identity. Promotes maintenance of neuronal precursor cells and glial versus neuronal fate specification. Represses transcription by the cardiac transcriptional activators GATA4 and GATA6 and by the neuronal bHLH factors ASCL1/MASH1 and NEUROD4/MATH3. The sequence is that of Hairy/enhancer-of-split related with YRPW motif protein 1 (HEY1) from Canis lupus familiaris (Dog).